The chain runs to 3797 residues: A-kinase anchor protein 9 (3797 aa).

Residues 1 to 140 form a disordered region; it reads MEDEERQRKL…SSEQGAQSSQ (140 aa). Composition is skewed to polar residues over residues 50-65 and 92-108; these read HTDQQSGELCSESSQR and EISTTADECSSEINGCN. The segment covering 115–124 has biased composition (basic and acidic residues); sequence KPTDPLREEE. Serine 139 is subject to Phosphoserine. Coiled-coil stretches lie at residues 140 to 607 and 640 to 976; these read QTCL…LRTQ and IHYK…LLAN. The residue at position 1288 (serine 1288) is a Phosphoserine. Disordered stretches follow at residues 1643–1668, 2323–2343, and 2419–2454; these read STQTQDGHDDQEVEEQTLKDKTLERS, VVSTEQQREGARTLPEDEESF, and SDNLQPEDAPAQDVTKPLEKQTSLTRLQESPEASRT. 2 stretches are compositionally biased toward basic and acidic residues: residues 1648–1668 and 2328–2343; these read DGHDDQEVEEQTLKDKTLERS and QQREGARTLPEDEESF. A coiled-coil region spans residues 1808–2377; that stretch reads SRLQAAVEKL…MTHMNNVLKE (570 aa). Positions 2438-2454 are enriched in polar residues; sequence KQTSLTRLQESPEASRT. Residues 2498–2510 are PKA-RII subunit binding domain; it reads DLQRSLEKFAAAL. Disordered stretches follow at residues 2604–2695 and 3271–3296; these read LEEA…SSSG and MEKDRQVHQKTLQTEQEANTQGQKKM. Residues 2606 to 2615 show a composition bias toward acidic residues; sequence EAEERPEEGG. Basic and acidic residues predominate over residues 2642–2669; that stretch reads PLTEAKEKLSYSLEKEKRTGEQESREAP. The stretch at 2975–3325 forms a coiled coil; the sequence is LQKADRRSLL…QVYKLDLEGK (351 aa). Positions 3279-3294 are enriched in polar residues; that stretch reads QKTLQTEQEANTQGQK. A phosphoserine mark is found at serine 3732, serine 3755, and serine 3787.

In terms of assembly, interacts with the regulatory region of protein kinase N (PKN), protein phosphatase 2A (PP2A), protein phosphatase 1 (PP1) and the immature non-phosphorylated form of PKC epsilon. Interacts with CIP4 and FNBP1. Interacts with chloride intracellular channel proteins CLIC1, CLIC4 and CLIC5. CSNK1D binding promotes its centrosomal subcellular location. Interacts with GM130/GOLGA2; leading to recruitment to the Golgi apparatus. Interacts with KCNQ1; targets protein kinase A (PKA) catalytic and regulatory subunits and protein phosphatase 1 (PP1), to the heterodimer KCNQ1-KCNE1. Interacts with PDE4DIP isoform 2; this interaction stabilizes both proteins. In complex with PDE4DIP isoform 2, recruits CAMSAP2 to the Golgi apparatus. Forms a pericentrosomal complex with CDK5RAP2, EB1/MAPRE1 and PDE4DIP isoform 2; within this complex, MAPRE1 binding to CDK5RAP2 may be mediated by PDE4DIP. Interacts with MAPRE1 and MAPRE3. Interacts (via C-terminus) with CAMSAP2; this interaction is much stronger in the presence of PDE4DIP isoform 2. Interacts with CAMSAP3. Interacts (via C-terminus) with the gamma-tubulin ring complex (gamma-TuRC), composed of gamma-tubulin, TUBGCP2, TUBGCP3, TUBGCP4, TUBGCP5 and TUBGCP6.

The protein localises to the golgi apparatus. It is found in the cytoplasm. It localises to the cytoskeleton. Its subcellular location is the microtubule organizing center. The protein resides in the centrosome. In terms of biological role, scaffolding protein that assembles several protein kinases and phosphatases on the centrosome and Golgi apparatus. Required to maintain the integrity of the Golgi apparatus. Required for microtubule nucleation at the cis-side of the Golgi apparatus. Required for association of the centrosomes with the poles of the bipolar mitotic spindle during metaphase. In complex with PDE4DIP isoform 2/MMG8/SMYLE, recruits CAMSAP2 to the Golgi apparatus and tethers non-centrosomal minus-end microtubules to the Golgi, an important step for polarized cell movement. In complex with PDE4DIP isoform 2, EB1/MAPRE1 and CDK5RAP2, contributes to microtubules nucleation and extension also from the centrosome to the cell periphery. The chain is A-kinase anchor protein 9 (Akap9) from Mus musculus (Mouse).